Here is a 483-residue protein sequence, read N- to C-terminus: Myocilin (483 aa).

Positions 1–18 are cleaved as a signal peptide; it reads MPTAQLLLLACLLWGLEA. A glycan (N-linked (GlcNAc...) asparagine) is linked at N43. Residues 51-162 are a coiled coil; that stretch reads GQAMSAIQDL…SQEVARLRRG (112 aa). Residues 153–179 form a disordered region; that stretch reads SQEVARLRRGQCPQAHSSSQDVPAGSR. Residues 223-482 form the Olfactomedin-like domain; sequence GCGELVWVGE…MVTYDIRLSK (260 aa). An intrachain disulfide couples C224 to C412. 5 residues coordinate Ca(2+): D359, N407, A408, I456, and D457. The short motif at 481–483 is the Microbody targeting signal element; that stretch reads SKM.

In terms of assembly, homodimer (via N-terminus). Can also form higher oligomers. Interacts with OLFM3, FN1, NRCAM, GLDN and NFASC. Interacts (via N-terminus) with MYL2. Interacts with SFRP1, FRZB, FZD7, FZD10, FZD1 and WIF1; regulates Wnt signaling. Interacts with SNTA1; regulates muscle hypertrophy. Interacts with ERBB2 and ERBB3; activates ERBB2-ERBB3 signaling pathway. Interacts with SNCG; affects its secretion and its aggregation. In terms of processing, N-glycosylated. Palmitoylated. Post-translationally, undergoes a calcium-dependent proteolytic cleavage at Arg-205 by CAPN2 in the endoplasmic reticulum. The result is the production of two fragments, one of 35 kDa containing the C-terminal olfactomedin-like domain, and another of 20 kDa containing the N-terminal leucine zipper-like domain. Expressed in optic nerve head, ciliary body and retina.

It localises to the secreted. Its subcellular location is the golgi apparatus. The protein resides in the cytoplasmic vesicle. The protein localises to the extracellular space. It is found in the extracellular matrix. It localises to the extracellular exosome. Its subcellular location is the mitochondrion. The protein resides in the mitochondrion intermembrane space. The protein localises to the mitochondrion inner membrane. It is found in the mitochondrion outer membrane. It localises to the rough endoplasmic reticulum. Its subcellular location is the cell projection. The protein resides in the cilium. The protein localises to the endoplasmic reticulum. Functionally, secreted glycoprotein regulating the activation of different signaling pathways in adjacent cells to control different processes including cell adhesion, cell-matrix adhesion, cytoskeleton organization and cell migration. Promotes substrate adhesion, spreading and formation of focal contacts. Negatively regulates cell-matrix adhesion and stress fiber assembly through Rho protein signal transduction. Modulates the organization of actin cytoskeleton by stimulating the formation of stress fibers through interactions with components of Wnt signaling pathways. Promotes cell migration through activation of PTK2 and the downstream phosphatidylinositol 3-kinase signaling. Plays a role in bone formation and promotes osteoblast differentiation in a dose-dependent manner through mitogen-activated protein kinase signaling. Mediates myelination in the peripheral nervous system through ERBB2/ERBB3 signaling. Plays a role as a regulator of muscle hypertrophy through the components of dystrophin-associated protein complex. Involved in positive regulation of mitochondrial depolarization. Plays a role in neurite outgrowth. May participate in the obstruction of fluid outflow in the trabecular meshwork. The polypeptide is Myocilin (MYOC) (Canis lupus familiaris (Dog)).